Reading from the N-terminus, the 90-residue chain is Transcriptional repressor SdpR (90 aa).

The 87-residue stretch at 1–87 (MNNVFKAISD…WMLNFINKGD (87 aa)) folds into the HTH arsR-type domain. A DNA-binding region (H-T-H motif) is located at residues 39–62 (PSISHHLNILKQAEVISDHRKGQF).

Its subcellular location is the cytoplasm. In terms of biological role, represses the transcription of the sdpIR operon and of several other operons that probably contribute to delaying commitment to sporulation. This chain is Transcriptional repressor SdpR (sdpR), found in Bacillus subtilis (strain 168).